The following is a 522-amino-acid chain: Glutamyl-tRNA(Gln) amidotransferase subunit A (522 aa).

Residues lysine 88 and serine 163 each act as charge relay system in the active site. Residue serine 187 is the Acyl-ester intermediate of the active site.

It belongs to the amidase family. GatA subfamily. Heterotrimer of A, B and C subunits.

The enzyme catalyses L-glutamyl-tRNA(Gln) + L-glutamine + ATP + H2O = L-glutaminyl-tRNA(Gln) + L-glutamate + ADP + phosphate + H(+). In terms of biological role, allows the formation of correctly charged Gln-tRNA(Gln) through the transamidation of misacylated Glu-tRNA(Gln) in organisms which lack glutaminyl-tRNA synthetase. The reaction takes place in the presence of glutamine and ATP through an activated gamma-phospho-Glu-tRNA(Gln). This Paenarthrobacter aurescens (strain TC1) protein is Glutamyl-tRNA(Gln) amidotransferase subunit A.